The primary structure comprises 470 residues: ATP synthase subunit beta (470 aa).

155 to 162 (GGAGVGKT) contacts ATP.

This sequence belongs to the ATPase alpha/beta chains family. In terms of assembly, F-type ATPases have 2 components, CF(1) - the catalytic core - and CF(0) - the membrane proton channel. CF(1) has five subunits: alpha(3), beta(3), gamma(1), delta(1), epsilon(1). CF(0) has three main subunits: a(1), b(2) and c(9-12). The alpha and beta chains form an alternating ring which encloses part of the gamma chain. CF(1) is attached to CF(0) by a central stalk formed by the gamma and epsilon chains, while a peripheral stalk is formed by the delta and b chains.

It localises to the cell membrane. It catalyses the reaction ATP + H2O + 4 H(+)(in) = ADP + phosphate + 5 H(+)(out). Functionally, produces ATP from ADP in the presence of a proton gradient across the membrane. The catalytic sites are hosted primarily by the beta subunits. This is ATP synthase subunit beta from Staphylococcus aureus (strain MW2).